The chain runs to 772 residues: 5-methyltetrahydropteroyltriglutamate--homocysteine methyltransferase (772 aa).

Residues R24 to K27 and K120 each bind 5-methyltetrahydropteroyltri-L-glutamate. L-homocysteine is bound by residues I446–S448 and E499. L-methionine contacts are provided by residues I446–S448 and E499. Residue W576 coordinates 5-methyltetrahydropteroyltri-L-glutamate. D614 is a binding site for L-homocysteine. Position 614 (D614) interacts with L-methionine. E620 lines the 5-methyltetrahydropteroyltri-L-glutamate pocket. The Zn(2+) site is built by H656, C658, and E680. The active-site Proton donor is the H709. C741 is a Zn(2+) binding site.

Belongs to the vitamin-B12 independent methionine synthase family. It depends on Zn(2+) as a cofactor.

The enzyme catalyses 5-methyltetrahydropteroyltri-L-glutamate + L-homocysteine = tetrahydropteroyltri-L-glutamate + L-methionine. It participates in amino-acid biosynthesis; L-methionine biosynthesis via de novo pathway; L-methionine from L-homocysteine (MetE route): step 1/1. Its function is as follows. Catalyzes the transfer of a methyl group from 5-methyltetrahydrofolate to homocysteine resulting in methionine formation. The sequence is that of 5-methyltetrahydropteroyltriglutamate--homocysteine methyltransferase from Streptomyces coelicolor (strain ATCC BAA-471 / A3(2) / M145).